Here is an 873-residue protein sequence, read N- to C-terminus: Outer membrane usher protein FimC (873 aa).

A signal peptide spans 1–15 (MKQIPLILAMSLAFA). An intrachain disulfide couples Cys815 to Cys838.

It belongs to the fimbrial export usher family.

Its subcellular location is the cell outer membrane. In terms of biological role, probable porin-like protein necessary for the assembly of a pilin-type protein. The protein is Outer membrane usher protein FimC (fimC) of Bordetella pertussis (strain Tohama I / ATCC BAA-589 / NCTC 13251).